Here is a 473-residue protein sequence, read N- to C-terminus: Photosystem II CP43 reaction center protein (473 aa).

Residues 1–14 (MKTLYSLRRFYPVE) constitute a propeptide that is removed on maturation. Thr-15 carries the post-translational modification N-acetylthreonine. Thr-15 carries the post-translational modification Phosphothreonine. The next 5 helical transmembrane spans lie at 69–93 (LFEV…PHLA), 134–155 (LLGP…KDRN), 178–200 (KALY…RRIT), 255–275 (KPFA…LSYS), and 291–312 (WFNN…ASQA). Glu-367 contributes to the [CaMn4O5] cluster binding site. Residues 447 to 471 (RARAAAAGFEKGIDRDFEPVLFMTP) traverse the membrane as a helical segment.

Belongs to the PsbB/PsbC family. PsbC subfamily. PSII is composed of 1 copy each of membrane proteins PsbA, PsbB, PsbC, PsbD, PsbE, PsbF, PsbH, PsbI, PsbJ, PsbK, PsbL, PsbM, PsbT, PsbX, PsbY, PsbZ, Psb30/Ycf12, at least 3 peripheral proteins of the oxygen-evolving complex and a large number of cofactors. It forms dimeric complexes. It depends on Binds multiple chlorophylls and provides some of the ligands for the Ca-4Mn-5O cluster of the oxygen-evolving complex. It may also provide a ligand for a Cl- that is required for oxygen evolution. PSII binds additional chlorophylls, carotenoids and specific lipids. as a cofactor.

Its subcellular location is the plastid. The protein resides in the chloroplast thylakoid membrane. In terms of biological role, one of the components of the core complex of photosystem II (PSII). It binds chlorophyll and helps catalyze the primary light-induced photochemical processes of PSII. PSII is a light-driven water:plastoquinone oxidoreductase, using light energy to abstract electrons from H(2)O, generating O(2) and a proton gradient subsequently used for ATP formation. The polypeptide is Photosystem II CP43 reaction center protein (Nuphar advena (Common spatterdock)).